The primary structure comprises 295 residues: MYFQDVIATLHQFWAAQGCLIAQPYDVEKGAGTKSPHTFLRALGPEPWAVAYVEPCRRPADGRYGENPNRYQYYYQYQVLIKPSPDNIQEIYLESLRALGIRPQDHDIRFVEDNWEDAAVGAWGVGWEVWLDGMEVTQFTYFQQCGGLDCRPVSIEITYGLERLTMYLQEVDAIASIRWNSTLTYGDVHLQGEIEQSTYNFEASDPERLFTLFSLYQQEAEQLLEKQLVLPSLDYVLKCSHTFNLLDARGVISVAERTRYIGRIRGLARRVAQAYVQQREALGFPLLKEPAAIAP.

It belongs to the class-II aminoacyl-tRNA synthetase family. In terms of assembly, tetramer of two alpha and two beta subunits.

Its subcellular location is the cytoplasm. It catalyses the reaction tRNA(Gly) + glycine + ATP = glycyl-tRNA(Gly) + AMP + diphosphate. The polypeptide is Glycine--tRNA ligase alpha subunit (Thermosynechococcus vestitus (strain NIES-2133 / IAM M-273 / BP-1)).